Reading from the N-terminus, the 283-residue chain is ESX-1 secretion-associated protein EspG1 (283 aa).

Belongs to the EspG family. Interacts specifically with ESX-1-dependent PE/PPE proteins. Interacts with PPE68.

Its subcellular location is the cytoplasm. Specific chaperone for cognate PE/PPE proteins. Plays an important role in preventing aggregation of PE/PPE dimers. The polypeptide is ESX-1 secretion-associated protein EspG1 (Mycobacterium tuberculosis (strain ATCC 25618 / H37Rv)).